The sequence spans 146 residues: MKIYVDADACPVKDVIIFEATKAEIPVTLVTSFSHYSNAEQPIGVETIYVDSGADAADYRIMQLAQKEDLIITQDYGLASLALAKGCIVLHHKGYKYTNDNIEQLLQTRYLSAMVRKSGKRTKGPKPFTAEDKEKFRALFKSFIVR.

Belongs to the UPF0178 family.

The protein is UPF0178 protein BCQ_2874 of Bacillus cereus (strain Q1).